Here is a 79-residue protein sequence, read N- to C-terminus: RNA-binding protein Hfq (79 aa).

The 61-residue stretch at 10–70 (DAFLNHVRKT…ISTIMPAQPI (61 aa)) folds into the Sm domain.

This sequence belongs to the Hfq family. As to quaternary structure, homohexamer.

Its function is as follows. RNA chaperone that binds small regulatory RNA (sRNAs) and mRNAs to facilitate mRNA translational regulation in response to envelope stress, environmental stress and changes in metabolite concentrations. Also binds with high specificity to tRNAs. In Ruegeria sp. (strain TM1040) (Silicibacter sp.), this protein is RNA-binding protein Hfq.